We begin with the raw amino-acid sequence, 72 residues long: MAKDDVIEVEGKVIDTMPNAMFTVELENGHQILATVSGKIRKNYIRILAGDRVTVEMSPYDLTRGRITYRFK.

One can recognise an S1-like domain in the interval 1-72; it reads MAKDDVIEVE…TRGRITYRFK (72 aa).

Belongs to the IF-1 family. Component of the 30S ribosomal translation pre-initiation complex which assembles on the 30S ribosome in the order IF-2 and IF-3, IF-1 and N-formylmethionyl-tRNA(fMet); mRNA recruitment can occur at any time during PIC assembly.

It localises to the cytoplasm. Functionally, one of the essential components for the initiation of protein synthesis. Stabilizes the binding of IF-2 and IF-3 on the 30S subunit to which N-formylmethionyl-tRNA(fMet) subsequently binds. Helps modulate mRNA selection, yielding the 30S pre-initiation complex (PIC). Upon addition of the 50S ribosomal subunit IF-1, IF-2 and IF-3 are released leaving the mature 70S translation initiation complex. This chain is Translation initiation factor IF-1, found in Streptococcus gordonii (strain Challis / ATCC 35105 / BCRC 15272 / CH1 / DL1 / V288).